A 356-amino-acid polypeptide reads, in one-letter code: MHWSRFVGIFLVFSVFSLVNCQCDSGELFVVRFPTNPIMNNTRMCMTYDNDININFPTVIKTPIWLKNRLYPIIGRGPEYLKYFSDHHGKEIFVSYTDDLRGPWVVHAPGTLKLSQVLDAFNASSVNDTKSEIASADIYLDHANKTVRMYFHRRVPNDNYAIVSSIAYSKDGINFDNIDTRNIGSAYIRHFVHDGYIYLTDRVGKLWRSRDGVNNLEPGTTTIGDAFTNNSMVNGDGYTGLLRHLGLIKSGDYLYIYGTRIGDSPERILRTKMKLTNDWTTWNAEYPAKEGFRPETDYEGANLPNIPSKKGSANQPVNQLRDPFPFYDMGRCYMFYTVAGESGIAGARLPKCWENK.

Positions 1–21 (MHWSRFVGIFLVFSVFSLVNC) are cleaved as a signal peptide. The segment at 293–317 (RPETDYEGANLPNIPSKKGSANQPV) is disordered.

This is an uncharacterized protein from Acanthamoeba polyphaga mimivirus (APMV).